The sequence spans 458 residues: Photosystem II CP43 reaction center protein (458 aa).

The next 5 membrane-spanning stretches (helical) occupy residues 54–78 (LFEV…PHLA), 119–140 (LRGP…KDKN), 163–185 (KAMF…RVIT), 240–260 (RPFN…LSYS), and 276–297 (WFNN…ASQA). Position 352 (Glu352) interacts with [CaMn4O5] cluster. Residues 432–456 (RARAAAAGFEKGIDRKTEPVLSMSD) form a helical membrane-spanning segment.

Belongs to the PsbB/PsbC family. PsbC subfamily. As to quaternary structure, PSII is composed of 1 copy each of membrane proteins PsbA, PsbB, PsbC, PsbD, PsbE, PsbF, PsbH, PsbI, PsbJ, PsbK, PsbL, PsbM, PsbT, PsbX, PsbY, PsbZ, Psb30/Ycf12, peripheral proteins PsbO, CyanoQ (PsbQ), PsbU, PsbV and a large number of cofactors. It forms dimeric complexes. Requires Binds multiple chlorophylls and provides some of the ligands for the Ca-4Mn-5O cluster of the oxygen-evolving complex. It may also provide a ligand for a Cl- that is required for oxygen evolution. PSII binds additional chlorophylls, carotenoids and specific lipids. as cofactor.

The protein localises to the cellular thylakoid membrane. Functionally, one of the components of the core complex of photosystem II (PSII). It binds chlorophyll and helps catalyze the primary light-induced photochemical processes of PSII. PSII is a light-driven water:plastoquinone oxidoreductase, using light energy to abstract electrons from H(2)O, generating O(2) and a proton gradient subsequently used for ATP formation. In Prochlorothrix hollandica, this protein is Photosystem II CP43 reaction center protein.